Reading from the N-terminus, the 119-residue chain is Large ribosomal subunit protein uL22c (119 aa).

The protein belongs to the universal ribosomal protein uL22 family. As to quaternary structure, part of the 50S ribosomal subunit.

The protein localises to the plastid. It is found in the chloroplast. This protein binds specifically to 23S rRNA. Functionally, the globular domain of the protein is located near the polypeptide exit tunnel on the outside of the subunit, while an extended beta-hairpin is found that lines the wall of the exit tunnel in the center of the 70S ribosome. The sequence is that of Large ribosomal subunit protein uL22c (rpl22) from Chlorokybus atmophyticus (Soil alga).